A 517-amino-acid polypeptide reads, in one-letter code: MDSRVLGALAALLAAAAAWVMRAAAEWLWWRPRRLERSLRSQGVDGNLYRFLNGDLKETVRLTKEARAQPISPPSHRFLHRINPLLLRAISHHGKFALTWIGPTPRVSIMDPELVREVLSNKFGHFAKPKAAPIVKLLATGLANYEGEKWVRHRRIINPAFHLEKLKRMLPAFFSCCSELIGRWESLVGCDESREVDVWPELQNLTGDVISRTAFGSSYAEGRRIFQLQSEQAELLIQAVQTVYIPGYRFLPTPKNIRRTKIDKEVRALLRSIIEKRENAMKMGDVHDDLLGLLMEYNLKESEHFNSKNIGMTTEDVIEECKLFYFAGQETTSVLLTWTMILLGMHPSWQDRAREEVSQVFGKNKPDFDGLSRLKTVTMILYEVLRLYPPIIFLTRRTYKPMMLGGITFPPEVQLALPIIFIHHDPEFWGEDAEEFNPDRFADGVSKASKNQMAFFPFGWGPRICIGQGFAMLEAKMGLSMILQRFSFELSPNYSHAPHTKITLQPQHGAQMVLHRL.

A helical membrane pass occupies residues 5 to 25; it reads VLGALAALLAAAAAWVMRAAA. Cys465 is a heme binding site.

It belongs to the cytochrome P450 family. In terms of tissue distribution, mainly expressed in leaves and, at low levels, in roots, fruits and stems.

Its subcellular location is the membrane. It participates in steroid metabolism; cholesterol metabolism. Functionally, involved in the biosynthesis of spiroketal steroid and saponin natural products from cholesterol such as diosgenin and analogs (e.g. furostanol and spirostanol), plant defense compounds used as main precursors for the industrial production of steroid hormones. During the 5,6-spiroketalization of cholesterol, may catalyze the 27-monohydroxylation of furostanol-type steroid to an intermediate product that undergoes a stereospecific formation of the terminal heterocycle to yield diosgenin. The protein is Cytochrome P450 CYP72A616 of Paris polyphylla (Daiswa polyphylla).